The following is a 586-amino-acid chain: Probable zinc metalloprotease EGY3, chloroplastic (586 aa).

Residues 1–54 (MASSSLVTSLLFSSSSSSNTATSTSSRRSFSLFSKNQYCKPRPLRRSSSRLLVR) constitute a chloroplast transit peptide. Disordered stretches follow at residues 13–32 (SSSS…SFSL) and 58–122 (QQQQ…DWRS). A compositionally biased stretch (basic and acidic residues) spans 61 to 73 (QEEKAAPAAESHH). A coiled-coil region spans residues 103-195 (VKKSKEELEE…NTFKALDLNK (93 aa)). 7 helical membrane-spanning segments follow: residues 287 to 307 (LSAV…SGFF), 318 to 338 (VSDV…SEIA), 389 to 409 (ASAY…DGSL), 427 to 447 (PLLS…GNVL), 454 to 474 (VGVP…VTSL), 506 to 526 (VALG…WGLF), and 550 to 570 (YAWG…NGGG).

Belongs to the peptidase M50B family.

The protein resides in the plastid. The protein localises to the chloroplast membrane. Functionally, probable membrane-associated metalloprotease that may be involved in chloroplast development. This is Probable zinc metalloprotease EGY3, chloroplastic (EGY3) from Oryza sativa subsp. japonica (Rice).